The following is a 246-amino-acid chain: Aquaporin SIP1-1 (246 aa).

The next 2 membrane-spanning stretches (helical) occupy residues 13–33 (AAVT…TAAV) and 45–65 (YALL…NLLC). The NPA 1 motif lies at 74–76 (NPT). 3 consecutive transmembrane segments (helical) span residues 95-115 (FPLA…AMAI), 139-159 (GAAA…WIIV), and 166-186 (IVKT…GAAY). An NPA 2 motif is present at residues 192 to 194 (NPA). The chain crosses the membrane as a helical span at residues 214–234 (VYWICPFVGAVLAAWVFRAVF).

The protein belongs to the MIP/aquaporin (TC 1.A.8) family. SIP (TC 1.A.8.10) subfamily. As to expression, expressed in roots, leaves and anthers.

It is found in the membrane. In terms of biological role, aquaporins facilitate the transport of water and small neutral solutes across cell membranes. The chain is Aquaporin SIP1-1 (SIP1-1) from Oryza sativa subsp. japonica (Rice).